The primary structure comprises 314 residues: Serine/threonine-protein phosphatase PP2A-5 catalytic subunit (314 aa).

Aspartate 62, histidine 64, aspartate 90, and asparagine 122 together coordinate Mn(2+). Catalysis depends on histidine 123, which acts as the Proton donor. The Mn(2+) site is built by histidine 172 and histidine 246.

This sequence belongs to the PPP phosphatase family. PP-2A subfamily. Mn(2+) is required as a cofactor.

It is found in the cytoplasm. The enzyme catalyses O-phospho-L-seryl-[protein] + H2O = L-seryl-[protein] + phosphate. The catalysed reaction is O-phospho-L-threonyl-[protein] + H2O = L-threonyl-[protein] + phosphate. The polypeptide is Serine/threonine-protein phosphatase PP2A-5 catalytic subunit (NPP5) (Nicotiana tabacum (Common tobacco)).